The primary structure comprises 367 residues: Cobalt-precorrin-5B C(1)-methyltransferase (367 aa).

Belongs to the CbiD family.

The enzyme catalyses Co-precorrin-5B + S-adenosyl-L-methionine = Co-precorrin-6A + S-adenosyl-L-homocysteine. It functions in the pathway cofactor biosynthesis; adenosylcobalamin biosynthesis; cob(II)yrinate a,c-diamide from sirohydrochlorin (anaerobic route): step 6/10. Catalyzes the methylation of C-1 in cobalt-precorrin-5B to form cobalt-precorrin-6A. The polypeptide is Cobalt-precorrin-5B C(1)-methyltransferase (Thermosynechococcus vestitus (strain NIES-2133 / IAM M-273 / BP-1)).